Here is a 444-residue protein sequence, read N- to C-terminus: Glutamate--tRNA ligase 1 (444 aa).

Residues 8 to 18 (PSPTGFLHVGN) carry the 'HIGH' region motif. A 'KMSKS' region motif is present at residues 239 to 243 (KISKR). Residue Lys242 coordinates ATP.

Belongs to the class-I aminoacyl-tRNA synthetase family. Glutamate--tRNA ligase type 1 subfamily. Monomer.

The protein resides in the cytoplasm. It carries out the reaction tRNA(Glu) + L-glutamate + ATP = L-glutamyl-tRNA(Glu) + AMP + diphosphate. Functionally, catalyzes the attachment of glutamate to tRNA(Glu) in a two-step reaction: glutamate is first activated by ATP to form Glu-AMP and then transferred to the acceptor end of tRNA(Glu). The polypeptide is Glutamate--tRNA ligase 1 (Zymomonas mobilis subsp. mobilis (strain ATCC 31821 / ZM4 / CP4)).